The sequence spans 373 residues: Cell surface Cu-only superoxide dismutase ARB_03674 (373 aa).

The first 55 residues, 1–55, serve as a signal peptide directing secretion; that stretch reads MIWKQPPRRMGEMGGSLSRRFGNAAASWAVWRVSRSCFSLLFFFYFFLFFSSSSL. 2 N-linked (GlcNAc...) asparagine glycosylation sites follow: asparagine 75 and asparagine 141. Residues histidine 194, histidine 196, and histidine 212 each coordinate Cu cation. Cysteine 206 and cysteine 289 form a disulfide bridge. N-linked (GlcNAc...) asparagine glycosylation is found at asparagine 254 and asparagine 274. Cu cation is bound at residue histidine 280. Residues asparagine 283 and asparagine 291 are each glycosylated (N-linked (GlcNAc...) asparagine). Positions 329 to 348 are disordered; that stretch reads GHAPTISATYTPTPTPSPPA. Low complexity predominate over residues 331–340; it reads APTISATYTP. Glycine 352 is lipidated: GPI-anchor amidated glycine. Residues 353 to 373 constitute a propeptide, removed in mature form; sequence AGRLVGFSLGAIMAALVPLAL.

This sequence belongs to the Cu-Zn superoxide dismutase family. In terms of assembly, monomer. It depends on Cu cation as a cofactor. In terms of processing, the GPI-anchor is attached to the protein in the endoplasmic reticulum and serves to target the protein to the cell surface. There, the glucosamine-inositol phospholipid moiety is cleaved off and the GPI-modified mannoprotein is covalently attached via its lipidless GPI glycan remnant to the 1,6-beta-glucan of the outer cell wall layer.

The protein localises to the secreted. Its subcellular location is the cell wall. The protein resides in the cell membrane. The enzyme catalyses 2 superoxide + 2 H(+) = H2O2 + O2. Its function is as follows. Superoxide dismutases serve to convert damaging superoxide radicals, a key form of ROS, to less damaging hydrogen peroxide that can be converted into water by catalase action. Degrades host-derived reactive oxygen species to escape innate immune surveillance. Involved in the occurrence of miconazole-tolerant persisters in biofilms. Persisters are cells that survive high doses of an antimicrobial agent. The unusual attributes of SOD5-like fungal proteins, including the absence of zinc and an open active site that readily captures extracellular copper, make these SODs well suited to meet challenges in zinc and copper availability at the host-pathogen interface. The sequence is that of Cell surface Cu-only superoxide dismutase ARB_03674 from Arthroderma benhamiae (strain ATCC MYA-4681 / CBS 112371) (Trichophyton mentagrophytes).